A 480-amino-acid chain; its full sequence is MEVTKPHACLREVVVTIPRGEVDRYMKDAYDELVPEAQVPGFRAGRAPRKLVEKQFKDRIEDRVKGSLLMDSLAKVTEDAEFSAIGEPDFDYESIELPEKGEFKYQFSIEVRPEFETPDWKKLELKKPVETISEEDVDAALQRVLSRYASLEASDAPAEIGDRLLITGKFVDGEKTISEMDEERVTLANRLSLSDAVCENFGELMKDCKEGDVVTGKVKLGEGHANEEMQGKEVDATFTVVEVLKEQLPELTSEFLDELGEFETEDELREFVRASLERQANFRTEQAMRGSIIEKLLASADFELPPTLVRRQMKRELDRKVLEFRRSGFDDDMIRRFVNASKQNMQQGTESSLREHFILEQIADEEKIDAEPQEYETEIQLIAEQSDSSPRRVRARLEKTGQMDALRNQIVERKVIELISEAATVTEEPVEKEAEEKNEEFAIDHEVLPTKDHDAIPAAKYDDNTPKGAETEDKQEKDKD.

The region spanning 161–249 (GDRLLITGKF…VVEVLKEQLP (89 aa)) is the PPIase FKBP-type domain. The disordered stretch occupies residues 426–480 (TEEPVEKEAEEKNEEFAIDHEVLPTKDHDAIPAAKYDDNTPKGAETEDKQEKDKD). Over residues 429-480 (PVEKEAEEKNEEFAIDHEVLPTKDHDAIPAAKYDDNTPKGAETEDKQEKDKD) the composition is skewed to basic and acidic residues.

This sequence belongs to the FKBP-type PPIase family. Tig subfamily.

It is found in the cytoplasm. The catalysed reaction is [protein]-peptidylproline (omega=180) = [protein]-peptidylproline (omega=0). Functionally, involved in protein export. Acts as a chaperone by maintaining the newly synthesized protein in an open conformation. Functions as a peptidyl-prolyl cis-trans isomerase. This chain is Trigger factor, found in Rhodopirellula baltica (strain DSM 10527 / NCIMB 13988 / SH1).